The following is a 254-amino-acid chain: Thiazole synthase (254 aa).

K95 serves as the catalytic Schiff-base intermediate with DXP. Residues G156, 182–183 (AG), and 204–205 (NT) contribute to the 1-deoxy-D-xylulose 5-phosphate site.

The protein belongs to the ThiG family. As to quaternary structure, homotetramer. Forms heterodimers with either ThiH or ThiS.

Its subcellular location is the cytoplasm. The catalysed reaction is [ThiS sulfur-carrier protein]-C-terminal-Gly-aminoethanethioate + 2-iminoacetate + 1-deoxy-D-xylulose 5-phosphate = [ThiS sulfur-carrier protein]-C-terminal Gly-Gly + 2-[(2R,5Z)-2-carboxy-4-methylthiazol-5(2H)-ylidene]ethyl phosphate + 2 H2O + H(+). Its pathway is cofactor biosynthesis; thiamine diphosphate biosynthesis. Catalyzes the rearrangement of 1-deoxy-D-xylulose 5-phosphate (DXP) to produce the thiazole phosphate moiety of thiamine. Sulfur is provided by the thiocarboxylate moiety of the carrier protein ThiS. In vitro, sulfur can be provided by H(2)S. The sequence is that of Thiazole synthase from Shewanella oneidensis (strain ATCC 700550 / JCM 31522 / CIP 106686 / LMG 19005 / NCIMB 14063 / MR-1).